Consider the following 266-residue polypeptide: MLDKVKNVIVVLSGKGGVGKSTVSTQLALALRATGHKVGLLDIDLCGPSVPYLLGLEGSDIYQCEDGWVPIYTDESKTLAVMSIGFLLKNRNDPVIWRGPKKTMMIRQFLTDVKWEDMDYLIIDTPPGTSDEHITVMECMREVPCNGAIIVTTPQGVALDDVRKEITFCKKTGIKLLGIVENMSGFVCPHCTECTNIFSSNGGAELARLAQVPHLGTLPIDPRVGVLSGSTASVLNELPDSSTAQIMRNIVQHLDALTAVPTPAQV.

14 to 21 provides a ligand contact to ATP; the sequence is GKGGVGKS. [4Fe-4S] cluster is bound by residues cysteine 188 and cysteine 191.

Belongs to the Mrp/NBP35 ATP-binding proteins family. Nubp2/CFD1 subfamily. In terms of assembly, heterotetramer of 2 Nubp1 and 2 Nubp2 chains. The cofactor is [4Fe-4S] cluster.

It is found in the cytoplasm. Its function is as follows. Component of the cytosolic iron-sulfur (Fe/S) protein assembly (CIA) machinery. Required for maturation of extramitochondrial Fe-S proteins. The Nubp1-Nubp2 heterotetramer forms a Fe-S scaffold complex, mediating the de novo assembly of an Fe-S cluster and its transfer to target apoproteins. The sequence is that of Cytosolic Fe-S cluster assembly factor Nubp2 homolog from Drosophila virilis (Fruit fly).